The primary structure comprises 139 residues: Endoribonuclease YbeY (139 aa).

His-105, His-109, and Asp-115 together coordinate Zn(2+).

It belongs to the endoribonuclease YbeY family. Zn(2+) serves as cofactor.

It is found in the cytoplasm. Functionally, single strand-specific metallo-endoribonuclease involved in late-stage 70S ribosome quality control and in maturation of the 3' terminus of the 16S rRNA. The protein is Endoribonuclease YbeY of Flavobacterium johnsoniae (strain ATCC 17061 / DSM 2064 / JCM 8514 / BCRC 14874 / CCUG 350202 / NBRC 14942 / NCIMB 11054 / UW101) (Cytophaga johnsonae).